Consider the following 176-residue polypeptide: Nucleoside triphosphate/diphosphate phosphatase (176 aa).

The active-site Proton donor is the arginine 23. Asparagine 87, aspartate 103, aspartate 105, aspartate 107, aspartate 120, and glutamate 123 together coordinate Mg(2+).

Belongs to the Ntdp family. Requires Mg(2+) as cofactor.

It carries out the reaction a ribonucleoside 5'-triphosphate + H2O = a ribonucleoside 5'-diphosphate + phosphate + H(+). It catalyses the reaction a ribonucleoside 5'-diphosphate + H2O = a ribonucleoside 5'-phosphate + phosphate + H(+). Its function is as follows. Has nucleoside phosphatase activity towards nucleoside triphosphates and nucleoside diphosphates. This chain is Nucleoside triphosphate/diphosphate phosphatase, found in Bacillus mycoides (strain KBAB4) (Bacillus weihenstephanensis).